Here is a 180-residue protein sequence, read N- to C-terminus: ATP synthase subunit delta (180 aa).

Belongs to the ATPase delta chain family. F-type ATPases have 2 components, F(1) - the catalytic core - and F(0) - the membrane proton channel. F(1) has five subunits: alpha(3), beta(3), gamma(1), delta(1), epsilon(1). F(0) has three main subunits: a(1), b(2) and c(10-14). The alpha and beta chains form an alternating ring which encloses part of the gamma chain. F(1) is attached to F(0) by a central stalk formed by the gamma and epsilon chains, while a peripheral stalk is formed by the delta and b chains.

The protein localises to the cell membrane. F(1)F(0) ATP synthase produces ATP from ADP in the presence of a proton or sodium gradient. F-type ATPases consist of two structural domains, F(1) containing the extramembraneous catalytic core and F(0) containing the membrane proton channel, linked together by a central stalk and a peripheral stalk. During catalysis, ATP synthesis in the catalytic domain of F(1) is coupled via a rotary mechanism of the central stalk subunits to proton translocation. In terms of biological role, this protein is part of the stalk that links CF(0) to CF(1). It either transmits conformational changes from CF(0) to CF(1) or is implicated in proton conduction. This Enterococcus hirae (strain ATCC 9790 / DSM 20160 / JCM 8729 / LMG 6399 / NBRC 3181 / NCIMB 6459 / NCDO 1258 / NCTC 12367 / WDCM 00089 / R) protein is ATP synthase subunit delta.